The sequence spans 248 residues: Glutathione S-transferase omega-2 (248 aa).

One can recognise a GST N-terminal domain in the interval 22-101; it reads GVIRIYSMRF…YLDDVFPGRK (80 aa). The active-site Nucleophile is Cys32. Glutathione-binding positions include Lys59, Val72, and 85–86; that span reads ES. Residues 106 to 231 enclose the GST C-terminal domain; it reads DPYERARQKM…IFLGFLNLYF (126 aa).

It belongs to the GST superfamily. Omega family.

The catalysed reaction is RX + glutathione = an S-substituted glutathione + a halide anion + H(+). It carries out the reaction L-dehydroascorbate + 2 glutathione = glutathione disulfide + L-ascorbate. The enzyme catalyses methylarsonate + 2 glutathione + H(+) = methylarsonous acid + glutathione disulfide + H2O. Exhibits glutathione-dependent thiol transferase activity. Has high dehydroascorbate reductase activity and may contribute to the recycling of ascorbic acid. Participates in the biotransformation of inorganic arsenic and reduces monomethylarsonic acid (MMA). The sequence is that of Glutathione S-transferase omega-2 (Gsto2) from Rattus norvegicus (Rat).